Reading from the N-terminus, the 481-residue chain is Probable cytosol aminopeptidase (481 aa).

Residues lysine 247 and aspartate 252 each coordinate Mn(2+). Lysine 259 is a catalytic residue. 3 residues coordinate Mn(2+): aspartate 270, aspartate 329, and glutamate 331. Residue arginine 333 is part of the active site.

It belongs to the peptidase M17 family. Mn(2+) serves as cofactor.

It is found in the cytoplasm. It catalyses the reaction Release of an N-terminal amino acid, Xaa-|-Yaa-, in which Xaa is preferably Leu, but may be other amino acids including Pro although not Arg or Lys, and Yaa may be Pro. Amino acid amides and methyl esters are also readily hydrolyzed, but rates on arylamides are exceedingly low.. The enzyme catalyses Release of an N-terminal amino acid, preferentially leucine, but not glutamic or aspartic acids.. Presumably involved in the processing and regular turnover of intracellular proteins. Catalyzes the removal of unsubstituted N-terminal amino acids from various peptides. The polypeptide is Probable cytosol aminopeptidase (Clostridium tetani (strain Massachusetts / E88)).